The chain runs to 374 residues: Protein-glutamate methylesterase/protein-glutamine glutaminase (374 aa).

A Response regulatory domain is found at 4–121 (KVLVVDDSGF…SRNPDKVKQM (118 aa)). At Asp-55 the chain carries 4-aspartylphosphate. Residues 144 to 186 (PVAAPVPASSPAPASSFASPAPARPAATARAAAPAASHSPAPK) form a disordered region. Low complexity predominate over residues 154 to 183 (PAPASSFASPAPARPAATARAAAPAASHSP). Positions 183-374 (PAPKRKPYKL…IGKHLVEACV (192 aa)) constitute a CheB-type methylesterase domain. Catalysis depends on residues Ser-198, His-225, and Asp-318.

This sequence belongs to the CheB family. In terms of processing, phosphorylated by CheA. Phosphorylation of the N-terminal regulatory domain activates the methylesterase activity.

The protein localises to the cytoplasm. It carries out the reaction [protein]-L-glutamate 5-O-methyl ester + H2O = L-glutamyl-[protein] + methanol + H(+). It catalyses the reaction L-glutaminyl-[protein] + H2O = L-glutamyl-[protein] + NH4(+). Its function is as follows. Involved in chemotaxis. Part of a chemotaxis signal transduction system that modulates chemotaxis in response to various stimuli. Catalyzes the demethylation of specific methylglutamate residues introduced into the chemoreceptors (methyl-accepting chemotaxis proteins or MCP) by CheR. Also mediates the irreversible deamidation of specific glutamine residues to glutamic acid. The sequence is that of Protein-glutamate methylesterase/protein-glutamine glutaminase from Pseudomonas putida (Arthrobacter siderocapsulatus).